We begin with the raw amino-acid sequence, 353 residues long: Photosystem II protein D1 (353 aa).

N-acetylthreonine is present on Thr2. Residue Thr2 is modified to Phosphothreonine. Transmembrane regions (helical) follow at residues 29–46 (YIGW…TATS), 118–133 (HFLL…EWEL), and 142–156 (WIAV…AATA). His118 contributes to the chlorophyll a binding site. Tyr126 is a pheophytin a binding site. The [CaMn4O5] cluster site is built by Asp170 and Glu189. A helical transmembrane segment spans residues 197 to 218 (FHMLGVAGVFGGSLFSAMHGSL). His198 contacts chlorophyll a. A quinone contacts are provided by residues His215 and 264 to 265 (SF). His215 is a binding site for Fe cation. His272 contributes to the Fe cation binding site. The chain crosses the membrane as a helical span at residues 274–288 (FLAAWPVVGIWFTAL). The [CaMn4O5] cluster site is built by His332, Glu333, and Ala344. A propeptide spanning residues 345–353 (AIEAPAVNG) is cleaved from the precursor.

This sequence belongs to the reaction center PufL/M/PsbA/D family. PSII is composed of 1 copy each of membrane proteins PsbA, PsbB, PsbC, PsbD, PsbE, PsbF, PsbH, PsbI, PsbJ, PsbK, PsbL, PsbM, PsbT, PsbX, PsbY, PsbZ, Psb30/Ycf12, at least 3 peripheral proteins of the oxygen-evolving complex and a large number of cofactors. It forms dimeric complexes. The cofactor is The D1/D2 heterodimer binds P680, chlorophylls that are the primary electron donor of PSII, and subsequent electron acceptors. It shares a non-heme iron and each subunit binds pheophytin, quinone, additional chlorophylls, carotenoids and lipids. D1 provides most of the ligands for the Mn4-Ca-O5 cluster of the oxygen-evolving complex (OEC). There is also a Cl(-1) ion associated with D1 and D2, which is required for oxygen evolution. The PSII complex binds additional chlorophylls, carotenoids and specific lipids.. In terms of processing, tyr-161 forms a radical intermediate that is referred to as redox-active TyrZ, YZ or Y-Z. Post-translationally, C-terminally processed by CTPA; processing is essential to allow assembly of the oxygen-evolving complex and thus photosynthetic growth.

It localises to the plastid. Its subcellular location is the chloroplast thylakoid membrane. It catalyses the reaction 2 a plastoquinone + 4 hnu + 2 H2O = 2 a plastoquinol + O2. Functionally, photosystem II (PSII) is a light-driven water:plastoquinone oxidoreductase that uses light energy to abstract electrons from H(2)O, generating O(2) and a proton gradient subsequently used for ATP formation. It consists of a core antenna complex that captures photons, and an electron transfer chain that converts photonic excitation into a charge separation. The D1/D2 (PsbA/PsbD) reaction center heterodimer binds P680, the primary electron donor of PSII as well as several subsequent electron acceptors. The chain is Photosystem II protein D1 from Conocephalum japonicum (Liverwort).